A 459-amino-acid polypeptide reads, in one-letter code: Zinc finger transcription factor lin-29 (459 aa).

Positions 1 to 14 (MDQTVLDSAFNSPV) are enriched in polar residues. The interval 1–73 (MDQTVLDSAF…GSTGSTPAHH (73 aa)) is disordered. Low complexity predominate over residues 16–56 (SGIAGTTTGSGSTTHFGVGTNFKVSVRSSSRSTDGTDSTDG). The span at 57–73 (ANSDNVTGSTGSTPAHH) shows a compositional bias: polar residues. C2H2-type zinc fingers lie at residues 151-173 (YKCTQCVKAFANSSYLSQHMRIH), 180-202 (GPCNYCGKKFTQLSHLQQHIRTH), 208-232 (YKCKFTGCDKAFSQLSNLQSHSRCH), 238-260 (FKCNSCYKCFTDEQSLLDHIPKH), and 269-291 (HICPFCGKSYTQQTYLQKHMTKH). The tract at residues 390 to 406 (PGFNMITPLENIQRYNG) is interacts with mab-10. A compositionally biased stretch (low complexity) spans 423–444 (VSSTPSSTSSSSAGSSSSQGGV). The disordered stretch occupies residues 423-459 (VSSTPSSTSSSSAGSSSSQGGVFNPQSLINNMKNHSY). The span at 446–459 (NPQSLINNMKNHSY) shows a compositional bias: polar residues.

Interacts (via C-terminus) with transcription cofactor mab-10. As to expression, expressed in lateral hypodermal seam cells (at protein level).

The protein localises to the nucleus. In terms of biological role, transcription factor which regulates the expression of various genes, including those involved in cuticle synthesis and maintenance, such as collagens, and in lipid metabolism. Binds to promoter regions of genes, at 5'-[(T/G)TTTTTT(A/T/C/G)]-3' consensus sequences. Heterochronic protein which controls the choice of stage specific cell fates, including at the juvenile to adult transition. Promotes differentiation, together with transcriptional cofactor mab-10, perhaps as part of a transcriptional complex. Required for vulval morphogenesis and egg laying; perhaps by acting in a subset of the lateral seam cells. Involved in the exit of seam cells from the cell cycle. Required for specification of uterine pi-cell fate, acting upstream of lin-12 Notch signaling, perhaps via maintenance of lag-2 expression in the anchor cell (AC). Involved in morphogenesis of the specialized male tail used in mating. Acts cell non-autonomously from the hypodermis to regulate expression of genes in the intestine, including genes involved in lipid metabolism. May regulate vitellogenesis via the mTORC2 signaling mediated pathway, independently of daf-16. May promote nuclear accumulation of mab-10 in seam cells post-transcriptionally. Dispensable for seam cell fusion. Required for seam cell fusion. This chain is Zinc finger transcription factor lin-29, found in Caenorhabditis elegans.